Reading from the N-terminus, the 313-residue chain is Ribosomal RNA small subunit methyltransferase H (313 aa).

Residues 35–37, Asp55, Phe81, Asp103, and Gln110 each bind S-adenosyl-L-methionine; that span reads GGH.

It belongs to the methyltransferase superfamily. RsmH family.

The protein resides in the cytoplasm. It catalyses the reaction cytidine(1402) in 16S rRNA + S-adenosyl-L-methionine = N(4)-methylcytidine(1402) in 16S rRNA + S-adenosyl-L-homocysteine + H(+). In terms of biological role, specifically methylates the N4 position of cytidine in position 1402 (C1402) of 16S rRNA. The protein is Ribosomal RNA small subunit methyltransferase H of Pseudomonas paraeruginosa (strain DSM 24068 / PA7) (Pseudomonas aeruginosa (strain PA7)).